A 285-amino-acid chain; its full sequence is 3-methyl-2-oxobutanoate hydroxymethyltransferase (285 aa).

A disordered region spans residues 1–23; sequence MSEHNVYGAAQPAQPAQPAQPRT. Positions 9–21 are enriched in low complexity; sequence AAQPAQPAQPAQP. The Mg(2+) site is built by Asp66 and Asp105. Residues 66-67, Asp105, and Lys135 contribute to the 3-methyl-2-oxobutanoate site; that span reads DS. Glu137 contacts Mg(2+). The active-site Proton acceptor is the Glu203.

It belongs to the PanB family. Homodecamer; pentamer of dimers. It depends on Mg(2+) as a cofactor.

Its subcellular location is the cytoplasm. It catalyses the reaction 3-methyl-2-oxobutanoate + (6R)-5,10-methylene-5,6,7,8-tetrahydrofolate + H2O = 2-dehydropantoate + (6S)-5,6,7,8-tetrahydrofolate. The protein operates within cofactor biosynthesis; (R)-pantothenate biosynthesis; (R)-pantoate from 3-methyl-2-oxobutanoate: step 1/2. Functionally, catalyzes the reversible reaction in which hydroxymethyl group from 5,10-methylenetetrahydrofolate is transferred onto alpha-ketoisovalerate to form ketopantoate. This chain is 3-methyl-2-oxobutanoate hydroxymethyltransferase, found in Mycobacterium avium (strain 104).